The sequence spans 69 residues: Putative membrane protein insertion efficiency factor (69 aa).

It belongs to the UPF0161 family.

It is found in the cell membrane. Its function is as follows. Could be involved in insertion of integral membrane proteins into the membrane. The sequence is that of Putative membrane protein insertion efficiency factor from Desulfitobacterium hafniense (strain Y51).